We begin with the raw amino-acid sequence, 1255 residues long: DNA-directed RNA polymerase subunit beta' (1255 aa).

4 residues coordinate Zn(2+): Cys60, Cys62, Cys77, and Cys80. Mg(2+)-binding residues include Asp503, Asp505, and Asp507. Residues Cys875, Cys950, Cys957, and Cys960 each contribute to the Zn(2+) site.

It belongs to the RNA polymerase beta' chain family. As to quaternary structure, the RNAP catalytic core consists of 2 alpha, 1 beta, 1 beta' and 1 omega subunit. When a sigma factor is associated with the core the holoenzyme is formed, which can initiate transcription. Mg(2+) is required as a cofactor. The cofactor is Zn(2+).

The enzyme catalyses RNA(n) + a ribonucleoside 5'-triphosphate = RNA(n+1) + diphosphate. Functionally, DNA-dependent RNA polymerase catalyzes the transcription of DNA into RNA using the four ribonucleoside triphosphates as substrates. This chain is DNA-directed RNA polymerase subunit beta', found in Mycoplasma capricolum subsp. capricolum (strain California kid / ATCC 27343 / NCTC 10154).